Here is a 362-residue protein sequence, read N- to C-terminus: Cobalt-precorrin-5B C(1)-methyltransferase (362 aa).

This sequence belongs to the CbiD family.

The enzyme catalyses Co-precorrin-5B + S-adenosyl-L-methionine = Co-precorrin-6A + S-adenosyl-L-homocysteine. It functions in the pathway cofactor biosynthesis; adenosylcobalamin biosynthesis; cob(II)yrinate a,c-diamide from sirohydrochlorin (anaerobic route): step 6/10. Catalyzes the methylation of C-1 in cobalt-precorrin-5B to form cobalt-precorrin-6A. The chain is Cobalt-precorrin-5B C(1)-methyltransferase from Burkholderia cenocepacia (strain ATCC BAA-245 / DSM 16553 / LMG 16656 / NCTC 13227 / J2315 / CF5610) (Burkholderia cepacia (strain J2315)).